Reading from the N-terminus, the 412-residue chain is uncharacterized protein (412 aa).

In terms of domain architecture, TRAM spans 6–64; that stretch reads ELAKGDIISVEVLRPAHGGEGIGHHDGRVIFVKGGIPGDVVDVEIAQLKKKWARGEVVK. The S-adenosyl-L-methionine site is built by Gln-242, Tyr-278, Glu-300, and Asp-341. Cys-368 functions as the Nucleophile in the catalytic mechanism.

Belongs to the class I-like SAM-binding methyltransferase superfamily. RNA M5U methyltransferase family.

This is an uncharacterized protein from Corynebacterium glutamicum (strain ATCC 13032 / DSM 20300 / JCM 1318 / BCRC 11384 / CCUG 27702 / LMG 3730 / NBRC 12168 / NCIMB 10025 / NRRL B-2784 / 534).